A 1087-amino-acid polypeptide reads, in one-letter code: Error-prone DNA polymerase 3 (1087 aa).

A disordered region spans residues 1040-1064 (AGRGDEFAHGSPGSSDTRDKSKPVV).

It belongs to the DNA polymerase type-C family. DnaE2 subfamily.

The protein localises to the cytoplasm. It catalyses the reaction DNA(n) + a 2'-deoxyribonucleoside 5'-triphosphate = DNA(n+1) + diphosphate. DNA polymerase involved in damage-induced mutagenesis and translesion synthesis (TLS). It is not the major replicative DNA polymerase. The chain is Error-prone DNA polymerase 3 from Agrobacterium fabrum (strain C58 / ATCC 33970) (Agrobacterium tumefaciens (strain C58)).